A 232-amino-acid polypeptide reads, in one-letter code: uncharacterized protein (232 aa).

Residues 89–140 (EFGTWQRRKNSLEDSLREVMKRRGELQDQLTAELGAIERMQTDLVGARQTLD) adopt a coiled-coil conformation.

This is an uncharacterized protein from Mycobacterium leprae (strain TN).